We begin with the raw amino-acid sequence, 2359 residues long: Pre-mRNA-processing-splicing factor 8B (2359 aa).

A disordered region spans residues Met-1–Ala-50. Residues Thr-32–Thr-41 show a composition bias toward polar residues. In terms of domain architecture, MPN spans Thr-2129–Gly-2260.

It localises to the nucleus. Its function is as follows. Functions as a scaffold that mediates the ordered assembly of spliceosomal proteins and snRNAs. Required for the assembly of the U4/U6-U5 tri-snRNP complex. In Arabidopsis thaliana (Mouse-ear cress), this protein is Pre-mRNA-processing-splicing factor 8B.